Consider the following 162-residue polypeptide: CASP-like protein 1C2 (162 aa).

Residues 1–6 (MMKPKR) lie on the Cytoplasmic side of the membrane. A helical membrane pass occupies residues 7–27 (LLSLLLRLIAVGATLAAVIIM). Topologically, residues 28–49 (ATSHEKGTFFAVSYEAKYTDTP) are extracellular. The helical transmembrane segment at 50 to 70 (AFKYFVIANAIVTVYGFLVLF) threads the bilayer. The Cytoplasmic portion of the chain corresponds to 71-79 (HPPGSPLWR). The chain crosses the membrane as a helical span at residues 80–100 (LVLALDLVFTMLLISSISAAL). Residues 101–130 (AVAQVGKNGNSRAGWLPVCGQVTKYCNQVT) lie on the Extracellular side of the membrane. Residues 131–151 (GALVAGLIALITYIILLLHSI) form a helical membrane-spanning segment. At 152–162 (YTFLNPLLEKA) the chain is on the cytoplasmic side.

It belongs to the Casparian strip membrane proteins (CASP) family. In terms of assembly, homodimer and heterodimers.

The protein resides in the cell membrane. The sequence is that of CASP-like protein 1C2 from Populus trichocarpa (Western balsam poplar).